A 201-amino-acid polypeptide reads, in one-letter code: Probable GTP-binding protein EngB (201 aa).

In terms of domain architecture, EngB-type G spans 22–195; sequence SLPEIAFCGR…MEQLEMILKY (174 aa). Residues 30 to 37, 57 to 61, 75 to 78, 142 to 145, and 174 to 176 contribute to the GTP site; these read GRSNVGKS, GKTRT, DLPG, TKLD, and YSS. Ser-37 and Thr-59 together coordinate Mg(2+).

The protein belongs to the TRAFAC class TrmE-Era-EngA-EngB-Septin-like GTPase superfamily. EngB GTPase family. Mg(2+) is required as a cofactor.

Functionally, necessary for normal cell division and for the maintenance of normal septation. This is Probable GTP-binding protein EngB from Finegoldia magna (strain ATCC 29328 / DSM 20472 / WAL 2508) (Peptostreptococcus magnus).